The primary structure comprises 137 residues: Small ribosomal subunit protein uS11 (137 aa).

Disordered stretches follow at residues 1-32 (MPPK…AHIK) and 118-137 (ISDV…RRRV). The span at 12–21 (KTQKSRRRDK) shows a compositional bias: basic residues.

The protein belongs to the universal ribosomal protein uS11 family. Part of the 30S ribosomal subunit. Interacts with proteins S7 and S18. Binds to IF-3.

In terms of biological role, located on the platform of the 30S subunit, it bridges several disparate RNA helices of the 16S rRNA. Forms part of the Shine-Dalgarno cleft in the 70S ribosome. This is Small ribosomal subunit protein uS11 from Nocardia farcinica (strain IFM 10152).